The following is a 519-amino-acid chain: tRNA pseudouridine synthase Pus10 (519 aa).

The interval 70–98 (NENEEIDENTKNNEDTENKADDKSQSNEE) is disordered. Residues 77 to 98 (ENTKNNEDTENKADDKSQSNEE) are compositionally biased toward basic and acidic residues. A THUMP domain is found at 144–265 (NESEENESNI…NQKIYLQINP (122 aa)). D334 acts as the Nucleophile in catalysis. Substrate is bound by residues Y398 and Y476.

This sequence belongs to the pseudouridine synthase Pus10 family.

It catalyses the reaction uridine(54) in tRNA = pseudouridine(54) in tRNA. The enzyme catalyses uridine(55) in tRNA = pseudouridine(55) in tRNA. Responsible for synthesis of pseudouridine from uracil-54 and uracil-55 in the psi GC loop of transfer RNAs. The sequence is that of tRNA pseudouridine synthase Pus10 from Methanococcus voltae (strain ATCC BAA-1334 / A3).